We begin with the raw amino-acid sequence, 530 residues long: Vesicular acetylcholine transporter (530 aa).

The Cytoplasmic segment spans residues 1–33; it reads MEPTAPTGQARAAATKLSEAVGAALQEPQRQRR. The chain crosses the membrane as a helical span at residues 34-54; that stretch reads LVLVIVCVALLLDNMLYMVIV. At 55-125 the chain is on the lumenal, vesicle side; it reads PIVPDYIAHM…PTESEDVKIG (71 aa). Residues N89 and N96 are each glycosylated (N-linked (GlcNAc...) asparagine). A helical membrane pass occupies residues 126–146; the sequence is VLFASKAILQLLVNPLSGPFI. The Cytoplasmic portion of the chain corresponds to 147–152; the sequence is DRMSYD. A helical transmembrane segment spans residues 153-173; it reads VPLLIGLGVMFASTVMFAFAE. Topologically, residues 174–182 are lumenal, vesicle; that stretch reads DYATFFAAR. Residues 183-203 form a helical membrane-spanning segment; sequence SLQGLGSAFADTSGIAMIADK. The Cytoplasmic segment spans residues 204 to 213; the sequence is YPEEPERSRA. Residues 214–234 form a helical membrane-spanning segment; that stretch reads LGVALAFISFGSLVAPPFGGI. Residues 235 to 242 lie on the Lumenal, vesicle side of the membrane; that stretch reads LYEFAGKR. A helical membrane pass occupies residues 243–263; it reads VPFLVLAAVSLFDALLLLAVA. Topologically, residues 264–288 are cytoplasmic; sequence KPFSAAARARANLPVGTPIHRLMLD. The chain crosses the membrane as a helical span at residues 289 to 309; that stretch reads PYIAVVAGALTTCNIPLAFLE. The Lumenal, vesicle segment spans residues 310–325; it reads PTIATWMKHTMAASEW. A helical membrane pass occupies residues 326-346; sequence EMGMVWLPAFVPHVLGVYLTV. At 347–356 the chain is on the cytoplasmic side; that stretch reads RLAARYPHLQ. Residues 357–377 form a helical membrane-spanning segment; it reads WLYGALGLAVIGVSSCVVPAC. Residues 378 to 388 are Lumenal, vesicle-facing; that stretch reads RSFAPLVVSLC. The helical transmembrane segment at 389–409 threads the bilayer; sequence GLCFGIALVDTALLPTLAFLV. At 410 to 422 the chain is on the cytoplasmic side; that stretch reads DVRHVSVYGSVYA. A helical membrane pass occupies residues 423–443; the sequence is IADISYSVAYALGPIVAGHIV. Over 444–447 the chain is Lumenal, vesicle; it reads HSLG. Residues 448-468 form a helical membrane-spanning segment; it reads FEQLSLGMGLANLLYAPVLLL. Over 469-530 the chain is Cytoplasmic; the sequence is LRNVGLLTRS…EDDYNYYSRS (62 aa). The segment at 471–530 is mediates interaction with SEC14L1; it reads NVGLLTRSRSERDVLLDEPPQGLYDAVRLREVQGKDGGEPCSPPGPFDGCEDDYNYYSRS. A disordered region spans residues 504-530; the sequence is GKDGGEPCSPPGPFDGCEDDYNYYSRS.

Belongs to the major facilitator superfamily. Vesicular transporter family. In terms of assembly, interacts with SEC14L1. In terms of tissue distribution, expressed in the spinal cord, brain (excluding the cerebellum), brain stem and cholinergic tissues. Not expressed in peripheral tissues such as liver and kidney.

It is found in the cytoplasmic vesicle. The protein resides in the secretory vesicle. Its subcellular location is the synaptic vesicle membrane. The enzyme catalyses acetylcholine(out) + 2 H(+)(in) = acetylcholine(in) + 2 H(+)(out). It catalyses the reaction choline(in) + 2 H(+)(out) = choline(out) + 2 H(+)(in). The catalysed reaction is serotonin(in) + 2 H(+)(out) = serotonin(out) + 2 H(+)(in). In terms of biological role, electrogenic antiporter that exchanges one cholinergic neurotransmitter, acetylcholine or choline, with two intravesicular protons across the membrane of synaptic vesicles. Uses the electrochemical proton gradient established by the V-type proton-pump ATPase to store neurotransmitters inside the vesicles prior to their release via exocytosis. Determines cholinergic vesicular quantal size at presynaptic nerve terminals in developing neuro-muscular junctions with an impact on motor neuron differentiation and innervation pattern. Part of forebrain cholinergic system, regulates hippocampal synapse transmissions that underlie spatial memory formation. Can transport serotonin. The protein is Vesicular acetylcholine transporter (Slc18a3) of Mus musculus (Mouse).